A 1262-amino-acid polypeptide reads, in one-letter code: Zinc finger protein 592 (1262 aa).

Residues 23–45 form a disordered region; sequence SLDAKEAIQAPSEENESPLKSSG. 4 positions are modified to phosphoserine: serine 78, serine 142, serine 145, and serine 146. 3 disordered regions span residues 122–174, 200–278, and 294–494; these read SFTS…PPPG, KKEP…AHSK, and VANV…ASTP. Glycyl lysine isopeptide (Lys-Gly) (interchain with G-Cter in SUMO2) cross-links involve residues lysine 200 and lysine 204. Composition is skewed to basic and acidic residues over residues 213 to 232 and 298 to 308; these read QQEH…DLDS and TKEDQPGHTKD. Low complexity predominate over residues 343–367; the sequence is PSDSPRSICSDSSSKGSPSVAASSP. Over residues 454–463 the composition is skewed to polar residues; the sequence is IKTSDSSSPC. The segment covering 484–494 has biased composition (low complexity); the sequence is QQSTAPQASTP. The residue at position 529 (serine 529) is a Phosphoserine. Residue lysine 546 forms a Glycyl lysine isopeptide (Lys-Gly) (interchain with G-Cter in SUMO2) linkage. Serine 573 is subject to Phosphoserine. Residues 587 to 612 form a C2H2-type 1; atypical zinc finger; that stretch reads YCCLECGDAFALEKSLSQHYSRRSVH. A C2H2-type 2; atypical zinc finger spans residues 615 to 639; the sequence is VLCTLCSKTLLFFNKCSLLRHARDH. Serine 691 carries the phosphoserine modification. The C2H2-type 3; degenerate zinc-finger motif lies at 711–731; that stretch reads TKCPECHKQMRDYMVLATHFQ. The C2H2-type 4 zinc finger occupies 740–764; it reads LTCQVCQMLLPNQCSFCAHQRIHAH. The C2H2-type 5; atypical zinc finger occupies 768 to 790; sequence YCCPECGVLCRSAYFQTHVKENC. 3 C2H2-type zinc fingers span residues 799–822, 827–850, and 892–915; these read YRCI…QERH, HKCA…TTQH, and FKCP…KNTH. A compositionally biased stretch (low complexity) spans 924–935; sequence LSSLQSSTDTSS. The segment at 924–979 is disordered; that stretch reads LSSLQSSTDTSSNRPGSRAPAEPPATNVAARGSSLTAGRWGRPEAHRRAEARPRMR. Over residues 964-976 the composition is skewed to basic and acidic residues; it reads GRPEAHRRAEARP. C2H2-type zinc fingers lie at residues 983 to 1006 and 1013 to 1036; these read WTCQ…KKSH and YPCR…RNNH. The C2H2-type 11; atypical zinc-finger motif lies at 1043-1069; sequence YTCGYCTEDSPSFPRPSLLESHISLMH. Serine 1089 carries the post-translational modification Phosphoserine. The segment at 1124 to 1146 adopts a C2H2-type 12; atypical zinc-finger fold; the sequence is FQCAKCTFATDSELEFQSHIPQH. A C2H2-type 13 zinc finger spans residues 1153 to 1176; that stretch reads AQCLLCGLCYTSTSSLNRHLFIVH. 2 positions are modified to phosphoserine: serine 1198 and serine 1202. A disordered region spans residues 1222–1262; it reads PLVTDLGGQQGLALDEDSAQDPQNQPQASQDQNSHALSPQV. The segment covering 1241–1262 has biased composition (polar residues); it reads QDPQNQPQASQDQNSHALSPQV.

This sequence belongs to the krueppel C2H2-type zinc-finger protein family. In terms of assembly, interacts with ZMYND8. In terms of tissue distribution, expressed in the brain.

The protein resides in the nucleus. In terms of biological role, may be involved in transcriptional regulation. This chain is Zinc finger protein 592 (Znf592), found in Mus musculus (Mouse).